The sequence spans 112 residues: Type III inner-rod protein PscI (112 aa).

The protein belongs to the YscI/HrpB family. Homomultimer (through its C-terminal region).

In terms of biological role, component of the type III secretion (T3S) injectisome that translocates effector toxins into host cells, facilitating the establishment and dissemination of infection. Polymerizes into flexible and regularly twisted fibrils and plays an essential role in needle assembly. This is Type III inner-rod protein PscI (pscI) from Pseudomonas aeruginosa (strain ATCC 15692 / DSM 22644 / CIP 104116 / JCM 14847 / LMG 12228 / 1C / PRS 101 / PAO1).